The primary structure comprises 301 residues: uncharacterized protein (301 aa).

An N-terminal signal peptide occupies residues 1–22; it reads MPGRFTVALVIALGGTCGVADA. In terms of domain architecture, GP-PDE spans 31-300; the sequence is PMIVAHRAGT…DSPLAAQQWR (270 aa).

This is an uncharacterized protein from Mycobacterium tuberculosis (strain ATCC 25618 / H37Rv).